Reading from the N-terminus, the 451-residue chain is Porin AaxA (451 aa).

The first 27 residues, 1-27, serve as a signal peptide directing secretion; the sequence is MASFHSSLLTALCTLCTYGILTMPAYG.

Belongs to the OprB family.

The protein resides in the cell outer membrane. Its function is as follows. Facilitates L-arginine uptake, as part of the AaxABC system. The arginine uptake by the bacterium in the macrophage may be a virulence factor against the host innate immune response. The polypeptide is Porin AaxA (aaxA) (Chlamydia caviae (strain ATCC VR-813 / DSM 19441 / 03DC25 / GPIC) (Chlamydophila caviae)).